Here is a 109-residue protein sequence, read N- to C-terminus: Ferredoxin CarAc (109 aa).

Positions Ala3–Gln108 constitute a 2Fe-2S ferredoxin-type domain. The [2Fe-2S] cluster site is built by Cys43, Cys49, Cys52, and Cys89.

It belongs to the adrenodoxin/putidaredoxin family. In terms of assembly, monomer. Carbazole 1,9a-dioxygenase complex consists of a terminal oxygenase component CarAa, a ferredoxin reductase component fdr and a ferredoxin component CarAc. The cofactor is [2Fe-2S] cluster.

In terms of biological role, part of the multicomponent carbazole 1,9a-dioxygenase (CARDO), that converts carbazole (CAR) into 2-aminobiphenyl-2,3-diol. Acts as a mediator in the electron transfer from fdr to CarAa. This is Ferredoxin CarAc (carAc) from Sphingomonas sp.